Reading from the N-terminus, the 168-residue chain is Large ribosomal subunit protein bL9 (168 aa).

A disordered region spans residues 149–168 (QSFEEEPAPEAPAEEAEAAE). The segment covering 152-168 (EEEPAPEAPAEEAEAAE) has biased composition (acidic residues).

Belongs to the bacterial ribosomal protein bL9 family.

Its function is as follows. Binds to the 23S rRNA. This chain is Large ribosomal subunit protein bL9, found in Desulfovibrio desulfuricans (strain ATCC 27774 / DSM 6949 / MB).